A 416-amino-acid chain; its full sequence is Maltoporin (416 aa).

Residues 1 to 26 form the signal peptide; it reads MELTMKKVSVIAAAVAATLAAGSAFA.

Belongs to the porin LamB (TC 1.B.3) family. Homotrimer formed of three 18-stranded antiparallel beta-barrels, containing three independent channels.

It localises to the cell outer membrane. It catalyses the reaction beta-maltose(in) = beta-maltose(out). Functionally, involved in the transport of maltose and maltodextrins. This Vibrio cholerae serotype O1 (strain ATCC 39541 / Classical Ogawa 395 / O395) protein is Maltoporin.